Consider the following 899-residue polypeptide: Conserved oligomeric Golgi complex subunit 3 (899 aa).

The protein belongs to the COG3 family. As to quaternary structure, component of the conserved oligomeric Golgi complex which is composed of eight different subunits and is required for normal Golgi morphology and localization.

It localises to the golgi apparatus membrane. Functionally, involved in ER-Golgi transport. In Aedes aegypti (Yellowfever mosquito), this protein is Conserved oligomeric Golgi complex subunit 3.